A 219-amino-acid chain; its full sequence is Claudin-3 (219 aa).

The Cytoplasmic portion of the chain corresponds to 1–8; that stretch reads MSMGLEIT. Residues 9-29 form a helical membrane-spanning segment; it reads GTSLAVLGWLCTIVCCALPMW. At 30–80 the chain is on the extracellular side; that stretch reads RVSAFIGSSIITAQITWEGLWMNCVVQSTGQMQCKMYDSLLALPQDLQAAR. A helical transmembrane segment spans residues 81–101; that stretch reads ALIVVSILLAAFGLLVALVGA. Residues 102–115 lie on the Cytoplasmic side of the membrane; it reads QCTNCVQDETAKAK. A helical transmembrane segment spans residues 116–136; that stretch reads ITIVAGVLFLLAALLTLVPVS. Residues 137–159 lie on the Extracellular side of the membrane; sequence WSANTIIRDFYNPLVPEAQKREM. Residues 160–180 traverse the membrane as a helical segment; sequence GAGLYVGWAAAALQLLGGALL. Topologically, residues 181-219 are cytoplasmic; that stretch reads CCSCPPRDKYAPTKILYSAPRSTGPGTGTGTAYDRKDYV. Tyrosine 197 carries the phosphotyrosine modification. Serine 198 is subject to Phosphoserine. The interactions with TJP1, TJP2 and TJP3 stretch occupies residues 218–219; that stretch reads YV.

It belongs to the claudin family. Can form homo- and heteropolymers with other CLDN. Homopolymers interact with CLDN1 and CLDN2 homopolymers. Interacts in cis (within the same plasma membrane) with CLDN19. Directly interacts with TJP1/ZO-1, TJP2/ZO-2 and TJP3/ZO-3. In terms of assembly, (Microbial infection) Interacts with Clostridium perfringens enterotoxin CPE; the interaction may disrupt claudin assembly in tight junctions. In terms of tissue distribution, expressed in the lung. Expressed at high levels in the liver and at lower levels, in kidney and testis.

The protein localises to the cell junction. It is found in the tight junction. It localises to the cell membrane. In terms of biological role, plays a major role in tight junction-specific obliteration of the intercellular space, through calcium-independent cell-adhesion activity. The polypeptide is Claudin-3 (Cldn3) (Mus musculus (Mouse)).